Consider the following 1726-residue polypeptide: Transcription elongation factor SPT6 (1726 aa).

Acidic residues-rich tracts occupy residues 1–18 (MSDF…EFEE), 31–45 (EEDE…EDQD), and 55–79 (DDDD…SDSG). 3 disordered regions span residues 1–196 (MSDF…KGKK), 219–248 (AEFD…KKQT), and 482–512 (EVSE…QASR). Ser90 bears the Phosphoserine mark. Residues 93 to 104 (DYLDDDDLDLIE) show a composition bias toward acidic residues. Basic residues predominate over residues 110-120 (KVKRRKKKYSR). Acidic residues-rich tracts occupy residues 146–157 (GDGEGEVEDGEA), 166–186 (DEEE…DDDG), 219–240 (AEFD…DDES), and 484–501 (SEED…EEEE). Residues 502–512 (QKGPDLKQASR) are compositionally biased toward basic and acidic residues. Positions 806-865 (LKRRNAWREDEREKKQQDVENLKKFLLSKKPHVVAVSGENRDAHMVMEDIKRTISELEQN) form a coiled coil. Residues 1204–1273 (WNHFDSGSCP…EKFNVDLTCR (70 aa)) form the S1 motif domain. Residues 1316 to 1426 (YIKRVIAHPS…LLGHKYFHEC (111 aa)) enclose the SH2 domain. Phosphothreonine is present on Thr1522. Position 1525 is a phosphoserine (Ser1525). The segment covering 1611–1627 (LMTPSYSYTTPGQQQAM) has biased composition (polar residues). The segment at 1611-1726 (LMTPSYSYTT…ATPLLDEMDR (116 aa)) is disordered. 2 stretches are compositionally biased toward low complexity: residues 1628–1640 (TTPQ…PQSS) and 1647–1656 (SSSTPSSSSS). Residues 1657-1669 (RVRTPQPKASSHT) show a composition bias toward polar residues.

It belongs to the SPT6 family.

The protein resides in the nucleus. In terms of biological role, histone H3-H4 chaperone that plays a role in maintenance of chromatin structure during RNA polymerase II transcription elongation. Promotes the activation of the myogenic gene program by entailing erasure of the repressive H3K27me3 epigenetic mark through stabilization of the chromatin interaction of the H3K27 demethylase KDM6A. Plays an important role during early patterning and somitogenesis of the embryo. The chain is Transcription elongation factor SPT6 (supt6h) from Danio rerio (Zebrafish).